We begin with the raw amino-acid sequence, 160 residues long: Aspartate carbamoyltransferase regulatory chain (160 aa).

Cysteine 110, cysteine 115, cysteine 140, and cysteine 143 together coordinate Zn(2+).

It belongs to the PyrI family. In terms of assembly, contains catalytic and regulatory chains. Requires Zn(2+) as cofactor.

Involved in allosteric regulation of aspartate carbamoyltransferase. The chain is Aspartate carbamoyltransferase regulatory chain from Hyperthermus butylicus (strain DSM 5456 / JCM 9403 / PLM1-5).